The primary structure comprises 243 residues: Derlin-1.2 (243 aa).

Topologically, residues 1-20 are cytoplasmic; the sequence is MSSPAEYYKSLPPISKAYGT. The chain crosses the membrane as a helical span at residues 21–41; sequence LCFFTTVLVRLHILNPLFLYL. The Lumenal segment spans residues 42–54; sequence YYPRVFKKFEVWR. A helical membrane pass occupies residues 55-75; it reads IFTSFFFLGPFSINFGIRLLM. Topologically, residues 76–94 are cytoplasmic; that stretch reads IARYGVMLEKGAFDKRTAD. Residues 95–115 form a helical membrane-spanning segment; sequence FLWMMIFGAISLLVLSVIPQL. The Lumenal portion of the chain corresponds to 116 to 155; sequence NTYVLGLPMVSMLVYVWSRENPNAQINIYGILQLKAFYLP. The helical transmembrane segment at 156 to 176 threads the bilayer; it reads WVMLLLDVIFGSPLMPGLLGI. Over 177-243 the chain is Cytoplasmic; sequence MVGHLYYYFA…FRGRSYRLNQ (67 aa).

This sequence belongs to the derlin family. Expressed in roots and endosperm.

The protein resides in the endoplasmic reticulum membrane. Its function is as follows. May be involved in the degradation process of specific misfolded endoplasmic reticulum (ER) luminal proteins. This Zea mays (Maize) protein is Derlin-1.2 (DER1.2).